The primary structure comprises 201 residues: Peptidyl-tRNA hydrolase (201 aa).

Tyr14 lines the tRNA pocket. His19 functions as the Proton acceptor in the catalytic mechanism. TRNA contacts are provided by Tyr64, Asn66, and Asn112.

Belongs to the PTH family. Monomer.

The protein localises to the cytoplasm. The catalysed reaction is an N-acyl-L-alpha-aminoacyl-tRNA + H2O = an N-acyl-L-amino acid + a tRNA + H(+). Functionally, hydrolyzes ribosome-free peptidyl-tRNAs (with 1 or more amino acids incorporated), which drop off the ribosome during protein synthesis, or as a result of ribosome stalling. In terms of biological role, catalyzes the release of premature peptidyl moieties from peptidyl-tRNA molecules trapped in stalled 50S ribosomal subunits, and thus maintains levels of free tRNAs and 50S ribosomes. The sequence is that of Peptidyl-tRNA hydrolase from Rhodopseudomonas palustris (strain BisB18).